The sequence spans 575 residues: Melatonin-related receptor (575 aa).

Topologically, residues 1–30 are extracellular; it reads MGRTLAVPTPYGCIGCKLPQPDYPPALIVF. The helical transmembrane segment at 31–51 threads the bilayer; the sequence is MFCAMVITIVVDLIGNSMVIL. At 52–64 the chain is on the cytoplasmic side; it reads AVSKNKKLRNSGN. A helical transmembrane segment spans residues 65 to 85; sequence VFVVSLSVADMLVAIYPYPLM. At 86-103 the chain is on the extracellular side; sequence LHAMAIGGWDLSKLQCQM. The cysteines at positions 101 and 178 are disulfide-linked. Residues 104–124 form a helical membrane-spanning segment; the sequence is VGFITGLSVVGSIFNIMAIAI. Residues 125-143 lie on the Cytoplasmic side of the membrane; sequence NRYCYICHSLQYERIFSVR. The chain crosses the membrane as a helical span at residues 144-164; the sequence is NTCIYLAVTWIMTVLAVLPNM. At 165–188 the chain is on the extracellular side; that stretch reads YIGTIEYDPRTYTCIFNYVNNPAF. A helical transmembrane segment spans residues 189–209; sequence AVTIVCIHFVLPLLIVGFCYV. Topologically, residues 210–239 are cytoplasmic; it reads KIWTKVLAARDPAGQNPDNQLAEVRNFLTM. Residues 240–260 traverse the membrane as a helical segment; it reads FVIFLLFAVCWCPINALTVLV. Residues 261-273 are Extracellular-facing; that stretch reads AVNPKEMAGKIPN. The helical transmembrane segment at 274–294 threads the bilayer; sequence WVYLAAYFIAYFNSCLNAVIY. At 295–575 the chain is on the cytoplasmic side; the sequence is GVLNENFRRE…VDADSDEMAV (281 aa). Disordered regions lie at residues 368–421 and 446–474; these read VPLP…TVYP and SSHP…TGYT. Positions 455–474 are enriched in polar residues; the sequence is PSKTAISPATSFPKPTTGYT.

This sequence belongs to the G-protein coupled receptor 1 family. Homodimer, and heterodimer with MTNR1A and MTNR1B. Interacts with KAT5. Interacts with RTN4 isoform A/NOGO-A. Interacts with TGFBR1.

Its subcellular location is the cell membrane. In terms of biological role, g protein-coupled receptor that plays a role in numerous physiological processes including regulation of energy metabolism, neurite outgrowth or cell migration. Promotes self-renewal and neuronal differentiation of neural progenitor cells through activation of the NOTCH and WNT/beta-catenin signaling pathways. Modulates the KAT5-dependent glucocorticoid receptor signaling by modulating KAT5 subcellular compartmentalisation. Also plays a role in the activation TGFBR1 in the absence of TGFBR2 by interfering with FKBP1A binding to TGFBR1, leading to induction of both canonical and non-canonical SMAD signaling pathways resulting in inhibition of proliferation or promotion of migration. The polypeptide is Melatonin-related receptor (GPR50) (Ovis aries (Sheep)).